We begin with the raw amino-acid sequence, 262 residues long: Phosphomannomutase 1 (262 aa).

Residue Ala2 is modified to N-acetylalanine. The Nucleophile role is filled by Asp19. Residues Asp19 and Asp21 each contribute to the Mg(2+) site. The Proton donor/acceptor role is filled by Asp21. Arg28, Arg132, Arg143, Arg150, Met186, Ser188, and Asp190 together coordinate alpha-D-mannose 1-phosphate. Residues Asn218, Tyr230, Asp232, and Thr235 each contribute to the Mg(2+) site. Ser242 is subject to Phosphoserine.

Belongs to the eukaryotic PMM family. Homodimer. It depends on Mg(2+) as a cofactor. In terms of tissue distribution, present in brain, where it is restricted to neuronal cell bodies. Present at lower levels in pancreas, liver, lung, gonads, uterus, adrenal glands and pituitary (at protein level). Undetectable in intestine.

It is found in the cytoplasm. It catalyses the reaction alpha-D-mannose 1-phosphate = D-mannose 6-phosphate. It participates in nucleotide-sugar biosynthesis; GDP-alpha-D-mannose biosynthesis; alpha-D-mannose 1-phosphate from D-fructose 6-phosphate: step 2/2. With respect to regulation, IMP, a metabolite whose concentration is elevated in anoxia, inhibits phosphomannomutase and phosphoglucomutase activities and strongly enhances glucose-1,6-bisphosphatase activity. In terms of biological role, involved in the synthesis of the GDP-mannose and dolichol-phosphate-mannose required for a number of critical mannosyl transfer reactions. In addition, may be responsible for the degradation of glucose-1,6-bisphosphate in ischemic brain. This chain is Phosphomannomutase 1 (Pmm1), found in Mus musculus (Mouse).